The chain runs to 196 residues: Early light-induced protein, chloroplastic (196 aa).

Residues 1–48 constitute a chloroplast transit peptide; that stretch reads MAVSSCQSIMSNSMTNISSRSRVNQFTNIPSVYIPTLRRNVSLKVRSM. Basic and acidic residues predominate over residues 47–57; that stretch reads SMAEGEPKEQS. The disordered stretch occupies residues 47–81; it reads SMAEGEPKEQSKVAVDPTTPTASTPTPQPAYTRPP. A run of 3 helical transmembrane segments spans residues 105-125, 132-152, and 176-196; these read LAMIGFVAAMGVEIAKGQGLS, GVAWFLGTSVLLSLASLIPFF, and IAMLGLVALAFTEFVKGTSLV.

The protein belongs to the ELIP/psbS family.

Its subcellular location is the plastid. The protein resides in the chloroplast membrane. Its function is as follows. Probably involved in the integration of pigments into the mature pigment-protein complexes. The chain is Early light-induced protein, chloroplastic from Pisum sativum (Garden pea).